A 658-amino-acid chain; its full sequence is MAEDKPDAKSPKTGARPQGGADAGEPTTLLQRLRGTISKAVQNKVEGILQEVQKFSDNDKLYLYLQLPSGPSVGEKSSEPSLLSNEEYMYAYRWIRNHLEEHMDTCLPKQSVYDAYRKYCESLACCRPLSTANFGKIIREIFPDIKARRLGGRGQSKYCYSGIRRKTLVSMPPLPGLDLKGSESPEMGPEVSPAPRDELVEAACALTCDWAERILKRSFSSIVQVARYLLQQHLISARSAHAHVLKAGGLAEEDERAPRERSLCKSKNVVESLEGGGPKKPERPAQPPKEQEARAGTDLPGRAERKKSVIDSSVPAASKPQVNALVARLPVLLPRAPRSLITPISGTLKVATLPLPTRVGGPQTAVPIINMILPPVPTLSGAGPGPGPGLGPRFGPGPGLGPGPGPGLGAGLGPGLGPGLGAGPGPGLGAGLGAGLGLGPGRVPPRAPILPRGAENREVGISSDPRPHDKGIKRTAEVPLSEASGQDPPVKEMKHETQDTTVSEAKRKRGRPRKKPGGSGERNATPEKSAAIVNSPRSPRLLWETWGSKRENNFIGRPEGPGPGGEAERETVLVQGQQDGAVSKGERSLSSQEAKEAEDKIPPVTSKVSVIKGRIQKEALQLVKGEADAATQGNKGLKGRVLQSSLTPEHKDPKATPP.

A compositionally biased stretch (basic and acidic residues) spans 1-10 (MAEDKPDAKS). The interval 1 to 28 (MAEDKPDAKSPKTGARPQGGADAGEPTT) is disordered. N-acetylalanine is present on alanine 2. Serine 10 carries the post-translational modification Phosphoserine. Positions 24 to 89 (GEPTTLLQRL…PSLLSNEEYM (66 aa)) are N-terminal domain. The tract at residues 61 to 65 (LYLYL) is leucine-rich region; critical for dimer formation and for interaction with RFXAP. The segment at residues 91–167 (AYRWIRNHLE…YCYSGIRRKT (77 aa)) is a DNA-binding region (RFX-type winged-helix). A PxLPxI/L motif; mediates interaction with RFXANK motif is present at residues 172–177 (PPLPGL). Serine 184 carries the phosphoserine modification. Disordered stretches follow at residues 250–315 (LAEE…SSVP), 382–422 (AGPG…GLGA), 443–602 (VPPR…DKIP), and 624–658 (KGEA…ATPP). Residues 277–309 (GPKKPERPAQPPKEQEARAGTDLPGRAERKKSV) show a composition bias toward basic and acidic residues. 2 stretches are compositionally biased toward gly residues: residues 382–398 (AGPG…GPGP) and 406–422 (PGLG…GLGA). 2 stretches are compositionally biased toward basic and acidic residues: residues 465 to 476 (PRPHDKGIKRTA) and 489 to 498 (PVKEMKHETQ). Residues 506–516 (KRKRGRPRKKP) are compositionally biased toward basic residues. Positions 648–658 (PEHKDPKATPP) are enriched in basic and acidic residues.

This sequence belongs to the RFX family. In terms of assembly, homodimer. The RFX heterotetrameric complex consists of 2 molecules of RFX5 and one each of RFXAP and RFX-B/RFXANK; with each subunit representing a separate complementation group. Interacts (via PxLPxI/L motif) with RFXANK (via ankyrin repeats); the interaction is direct. RFX forms cooperative DNA binding complexes with X2BP and CBF/NF-Y. RFX associates with CIITA to form an active transcriptional complex. Post-translationally, phosphorylated.

The protein localises to the nucleus. Functionally, activates transcription from class II MHC promoters. Recognizes X-boxes. Mediates cooperative binding between RFX and NF-Y. RFX binds the X1 box of MHC-II promoters. This chain is DNA-binding protein Rfx5 (Rfx5), found in Mus musculus (Mouse).